Here is a 545-residue protein sequence, read N- to C-terminus: Probable bifunctional tRNA threonylcarbamoyladenosine biosynthesis protein (545 aa).

Residues 1 to 329 (MDTSKDLICI…YRSDMVEVNW (329 aa)) are kae1. Fe cation-binding residues include histidine 112, histidine 116, and tyrosine 133. L-threonylcarbamoyladenylate contacts are provided by residues 133–137 (YVSGG), aspartate 165, glycine 178, glutamate 182, and asparagine 262. Residue aspartate 290 coordinates Fe cation. The Protein kinase domain occupies 344-545 (IIPEHLIGKG…KEVEKRARYL (202 aa)). ATP-binding positions include 350–358 (IGKGAEADI) and lysine 371. Catalysis depends on aspartate 463, which acts as the Proton acceptor; for kinase activity.

This sequence in the N-terminal section; belongs to the KAE1 / TsaD family. The protein in the C-terminal section; belongs to the protein kinase superfamily. Tyr protein kinase family. BUD32 subfamily. As to quaternary structure, component of the KEOPS complex that consists of Kae1, Bud32, Cgi121 and Pcc1; the whole complex dimerizes. Fe(2+) serves as cofactor.

Its subcellular location is the cytoplasm. The enzyme catalyses L-seryl-[protein] + ATP = O-phospho-L-seryl-[protein] + ADP + H(+). It catalyses the reaction L-threonyl-[protein] + ATP = O-phospho-L-threonyl-[protein] + ADP + H(+). The catalysed reaction is L-threonylcarbamoyladenylate + adenosine(37) in tRNA = N(6)-L-threonylcarbamoyladenosine(37) in tRNA + AMP + H(+). Its function is as follows. Required for the formation of a threonylcarbamoyl group on adenosine at position 37 (t(6)A37) in tRNAs that read codons beginning with adenine. Is a component of the KEOPS complex that is probably involved in the transfer of the threonylcarbamoyl moiety of threonylcarbamoyl-AMP (TC-AMP) to the N6 group of A37. The Kae1 domain likely plays a direct catalytic role in this reaction. The Bud32 domain probably displays kinase activity that regulates Kae1 function. The chain is Probable bifunctional tRNA threonylcarbamoyladenosine biosynthesis protein from Methanococcus maripaludis (strain C5 / ATCC BAA-1333).